Consider the following 146-residue polypeptide: Leghemoglobin Lb120-29 (146 aa).

The Globin domain occupies 2-146 (GFTDKQEALV…LASAIKKAMS (145 aa)). Nitrated tyrosine is present on residues Tyr-24 and Tyr-29. A heme b-binding site is contributed by Ser-44. Residue Ser-44 is modified to Phosphoserine. His-61 contributes to the O2 binding site. 3 residues coordinate heme b: Lys-64, His-93, and Lys-96. Position 134 is a nitrated tyrosine (Tyr-134).

The protein belongs to the plant globin family. Monomer. Nitrated in effective nodules and particularly in hypoxic conditions; this mechanism may play a protective role in the symbiosis by buffering toxic peroxynitrite NO(2)(-). Nitration level decrease during nodule senescence. Post-translationally, phosphorylation at Ser-44 disrupts the molecular environment of its porphyrin ring oxygen binding pocket, thus leading to a reduced oxygen consumption and to the delivery of oxygen O(2) to symbiosomes. Root nodules.

Its subcellular location is the cytoplasm. The protein resides in the cytosol. It localises to the nucleus. Functionally, leghemoglobin that reversibly binds oxygen O(2) through a pentacoordinated heme iron. In root nodules, facilitates the diffusion of oxygen to the bacteroids while preventing the bacterial nitrogenase from being inactivated by buffering dioxygen, nitric oxide and carbon monoxide, and promoting the formation of reactive oxygen species (ROS, e.g. H(2)O(2)). This role is essential for symbiotic nitrogen fixation (SNF). This chain is Leghemoglobin Lb120-29, found in Pisum sativum (Garden pea).